Here is a 136-residue protein sequence, read N- to C-terminus: MARTKQTARKSTGGKAPRKQLATKAARKSAPATGGVKKPHRYRPGTVALREIRRYQKSTELLIRKLPFQRLVREIAQDFKTELRFQSSAVMALQEASEAYLVGLFEDTNLCAIHAKRVTIMPKDIQLARRIRGERA.

The disordered stretch occupies residues 1-43 (MARTKQTARKSTGGKAPRKQLATKAARKSAPATGGVKKPHRYR). K5 carries the post-translational modification N6-methylated lysine. K10 carries the post-translational modification N6-acetyllysine; alternate. K10 carries the post-translational modification N6-methylated lysine; alternate. A Phosphoserine modification is found at S11. An N6-acetyllysine mark is found at K15 and K24. N6-methylated lysine occurs at positions 28, 37, and 80.

It belongs to the histone H3 family. As to quaternary structure, the nucleosome is a histone octamer containing two molecules each of H2A, H2B, H3 and H4 assembled in one H3-H4 heterotetramer and two H2A-H2B heterodimers. The octamer wraps approximately 147 bp of DNA. Post-translationally, acetylation is generally linked to gene activation. In terms of processing, methylation at Lys-5 is linked to gene activation. Methylation at Lys-10 is linked to gene repression.

It localises to the nucleus. It is found in the chromosome. In terms of biological role, core component of nucleosome. Nucleosomes wrap and compact DNA into chromatin, limiting DNA accessibility to the cellular machineries which require DNA as a template. Histones thereby play a central role in transcription regulation, DNA repair, DNA replication and chromosomal stability. DNA accessibility is regulated via a complex set of post-translational modifications of histones, also called histone code, and nucleosome remodeling. The protein is Histone H3, embryonic of Paracentrotus lividus (Common sea urchin).